A 238-amino-acid polypeptide reads, in one-letter code: Ribosomal RNA small subunit methyltransferase G (238 aa).

S-adenosyl-L-methionine is bound by residues glycine 77, phenylalanine 82, 128–129, and arginine 147; that span reads AE. The disordered stretch occupies residues 216–238; it reads RKERSTPKKYPRKPGTPNKQPLS.

The protein belongs to the methyltransferase superfamily. RNA methyltransferase RsmG family.

The protein localises to the cytoplasm. Specifically methylates the N7 position of guanine in position 535 of 16S rRNA. This chain is Ribosomal RNA small subunit methyltransferase G, found in Halalkalibacterium halodurans (strain ATCC BAA-125 / DSM 18197 / FERM 7344 / JCM 9153 / C-125) (Bacillus halodurans).